We begin with the raw amino-acid sequence, 115 residues long: MKFVLLFGVFLVTLFSYSSAEMLDDFDQADEDELLSLIEKEEARAKECTPRFYDCSHDRHSCCRSELFKGVCTCFYPEGGDNEVCTCQQPKHLKYMEKAAGKAKKFGGKIKKWFG.

An N-terminal signal peptide occupies residues 1 to 20 (MKFVLLFGVFLVTLFSYSSA). Positions 21 to 44 (EMLDDFDQADEDELLSLIEKEEAR) are excised as a propeptide. 4 cysteine pairs are disulfide-bonded: cysteine 48–cysteine 63, cysteine 55–cysteine 72, cysteine 62–cysteine 87, and cysteine 74–cysteine 85.

The protein belongs to the neurotoxin 19 (CSTX) family. 01 subfamily. As to expression, expressed by the venom gland.

It localises to the secreted. The sequence is that of U3-lycotoxin-Ls1j from Lycosa singoriensis (Wolf spider).